Reading from the N-terminus, the 158-residue chain is NAD(P)H-quinone oxidoreductase subunit J, chloroplastic (158 aa).

This sequence belongs to the complex I 30 kDa subunit family. NDH is composed of at least 16 different subunits, 5 of which are encoded in the nucleus.

It localises to the plastid. It is found in the chloroplast thylakoid membrane. It carries out the reaction a plastoquinone + NADH + (n+1) H(+)(in) = a plastoquinol + NAD(+) + n H(+)(out). The catalysed reaction is a plastoquinone + NADPH + (n+1) H(+)(in) = a plastoquinol + NADP(+) + n H(+)(out). Its function is as follows. NDH shuttles electrons from NAD(P)H:plastoquinone, via FMN and iron-sulfur (Fe-S) centers, to quinones in the photosynthetic chain and possibly in a chloroplast respiratory chain. The immediate electron acceptor for the enzyme in this species is believed to be plastoquinone. Couples the redox reaction to proton translocation, and thus conserves the redox energy in a proton gradient. This Eucalyptus globulus subsp. globulus (Tasmanian blue gum) protein is NAD(P)H-quinone oxidoreductase subunit J, chloroplastic.